We begin with the raw amino-acid sequence, 546 residues long: Chaperonin GroEL (546 aa).

Residues 30–33, K51, 87–91, G415, and D496 each bind ATP; these read TLGP and DGTTT. Residues 526-546 are disordered; that stretch reads PEPKSAPAGGMGGMGGMDGMM. Over residues 534 to 546 the composition is skewed to gly residues; the sequence is GGMGGMGGMDGMM.

The protein belongs to the chaperonin (HSP60) family. As to quaternary structure, forms a cylinder of 14 subunits composed of two heptameric rings stacked back-to-back. Interacts with the co-chaperonin GroES.

The protein localises to the cytoplasm. It catalyses the reaction ATP + H2O + a folded polypeptide = ADP + phosphate + an unfolded polypeptide.. Its function is as follows. Together with its co-chaperonin GroES, plays an essential role in assisting protein folding. The GroEL-GroES system forms a nano-cage that allows encapsulation of the non-native substrate proteins and provides a physical environment optimized to promote and accelerate protein folding. The sequence is that of Chaperonin GroEL from Rhodopseudomonas palustris.